The chain runs to 210 residues: 3-oxo-tetronate 4-phosphate decarboxylase (210 aa).

Glu74 (proton acceptor) is an active-site residue. Glu74, His93, and His95 together coordinate Zn(2+). Tyr120 functions as the Proton donor in the catalytic mechanism. His160 contacts Zn(2+).

This sequence belongs to the aldolase class II family. AraD/FucA subfamily. Zn(2+) is required as a cofactor.

It catalyses the reaction 3-dehydro-4-O-phospho-D-erythronate + H(+) = dihydroxyacetone phosphate + CO2. It carries out the reaction 3-dehydro-4-O-phospho-L-erythronate + H(+) = dihydroxyacetone phosphate + CO2. Its function is as follows. Catalyzes the decarboxylation of 3-oxo-tetronate 4-phosphate to dihydroxyacetone phosphate (DHAP) and CO(2). The chain is 3-oxo-tetronate 4-phosphate decarboxylase from Haemophilus influenzae (strain ATCC 51907 / DSM 11121 / KW20 / Rd).